We begin with the raw amino-acid sequence, 615 residues long: Protein translocase subunit SecD (615 aa).

Helical transmembrane passes span Tyr10 to Gly30, Gln452 to Tyr472, Leu477 to Leu497, Met504 to Ile524, Gly548 to Val570, and Gly585 to Tyr605.

Belongs to the SecD/SecF family. SecD subfamily. As to quaternary structure, forms a complex with SecF. Part of the essential Sec protein translocation apparatus which comprises SecA, SecYEG and auxiliary proteins SecDF-YajC and YidC.

Its subcellular location is the cell inner membrane. In terms of biological role, part of the Sec protein translocase complex. Interacts with the SecYEG preprotein conducting channel. SecDF uses the proton motive force (PMF) to complete protein translocation after the ATP-dependent function of SecA. The protein is Protein translocase subunit SecD of Shigella flexneri.